The sequence spans 302 residues: Glutaminase (302 aa).

Substrate is bound by residues serine 61, asparagine 111, glutamate 155, asparagine 162, tyrosine 186, tyrosine 238, and valine 256.

The protein belongs to the glutaminase family. In terms of assembly, homotetramer.

It catalyses the reaction L-glutamine + H2O = L-glutamate + NH4(+). In Pseudomonas fluorescens (strain Pf0-1), this protein is Glutaminase.